Here is a 177-residue protein sequence, read N- to C-terminus: Peptide deformylase (177 aa).

Fe cation-binding residues include Cys-99 and His-141. The active site involves Glu-142. A Fe cation-binding site is contributed by His-145.

The protein belongs to the polypeptide deformylase family. Fe(2+) serves as cofactor.

It carries out the reaction N-terminal N-formyl-L-methionyl-[peptide] + H2O = N-terminal L-methionyl-[peptide] + formate. Its function is as follows. Removes the formyl group from the N-terminal Met of newly synthesized proteins. Requires at least a dipeptide for an efficient rate of reaction. N-terminal L-methionine is a prerequisite for activity but the enzyme has broad specificity at other positions. In Rhizorhabdus wittichii (strain DSM 6014 / CCUG 31198 / JCM 15750 / NBRC 105917 / EY 4224 / RW1) (Sphingomonas wittichii), this protein is Peptide deformylase.